A 133-amino-acid chain; its full sequence is Transcription antitermination protein NusB (133 aa).

The protein belongs to the NusB family.

In terms of biological role, involved in transcription antitermination. Required for transcription of ribosomal RNA (rRNA) genes. Binds specifically to the boxA antiterminator sequence of the ribosomal RNA (rrn) operons. The polypeptide is Transcription antitermination protein NusB (Shewanella denitrificans (strain OS217 / ATCC BAA-1090 / DSM 15013)).